The primary structure comprises 315 residues: tRNA uridine(34) hydroxylase (315 aa).

The Rhodanese domain occupies 136–230 (SDPETLVIDT…YLEEIPPEES (95 aa)). Residue Cys190 is the Cysteine persulfide intermediate of the active site.

It belongs to the TrhO family.

The catalysed reaction is uridine(34) in tRNA + AH2 + O2 = 5-hydroxyuridine(34) in tRNA + A + H2O. In terms of biological role, catalyzes oxygen-dependent 5-hydroxyuridine (ho5U) modification at position 34 in tRNAs. The chain is tRNA uridine(34) hydroxylase from Sinorhizobium medicae (strain WSM419) (Ensifer medicae).